We begin with the raw amino-acid sequence, 1050 residues long: NAD-specific glutamate dehydrogenase (1050 aa).

A disordered region spans residues 1 to 39; sequence MDSPSAPVPAHKLVDRLKDQTPRHPSPQPTHVSYPKVNG. A compositionally biased stretch (basic and acidic residues) spans 12–22; the sequence is KLVDRLKDQTP. K594 is a catalytic residue.

The protein belongs to the Glu/Leu/Phe/Val dehydrogenases family. As to quaternary structure, homotetramer.

It catalyses the reaction L-glutamate + NAD(+) + H2O = 2-oxoglutarate + NH4(+) + NADH + H(+). This Neurospora crassa (strain ATCC 24698 / 74-OR23-1A / CBS 708.71 / DSM 1257 / FGSC 987) protein is NAD-specific glutamate dehydrogenase (gdh-1).